We begin with the raw amino-acid sequence, 423 residues long: Salicylate 5-hydroxylase, large oxygenase component (423 aa).

Residues 1–20 (MSEPQRLKPVFPQDPKWPGE) are disordered. Residues 49–168 (WCYVGLEAEI…VAARGGAVFA (120 aa)) form the Rieske domain. Residues Cys91, His93, Cys111, and His114 each contribute to the [2Fe-2S] cluster site. Residues His224, His229, and Asp370 each contribute to the Fe cation site.

Belongs to the bacterial ring-hydroxylating dioxygenase alpha subunit family. As to quaternary structure, the salicylate 5-hydroxylase (S5H) multicomponent enzyme system is composed of an electron transfer component and an oxygenase component. The electron transfer component is comprised of a ferredoxin reductase (NagAa) and a ferredoxin (NagAb), and the oxygenase component is formed by a large subunit (NagG) and a small subunit (NagH). Fe cation serves as cofactor. [2Fe-2S] cluster is required as a cofactor.

It catalyses the reaction salicylate + NADH + O2 + H(+) = 2,5-dihydroxybenzoate + NAD(+) + H2O. It participates in aromatic compound metabolism; naphthalene degradation. Oxygenase component of the salicylate 5-hydroxylase (S5H) multicomponent enzyme system which catalyzes the 5-hydroxylation of salicylate to gentisate. Active only on substrates with a ring-substituted carboxylate group with an adjacent hydroxyl group. Primarily active against salicylate and substituted salicylates, but not against 2-hydroxycinnamate, 3-hydroxycinnamate, 2-hydroxyphenylacetate, 3-hydroxyphenylacetate, 2-hydroxybenzophenone, 1-hydroxy-2-naphthoate, 4-methoxysalicylate or 2-hydroxyacetophenone. The polypeptide is Salicylate 5-hydroxylase, large oxygenase component (Ralstonia sp).